The sequence spans 379 residues: Alpha-humulene synthase eupE (379 aa).

It belongs to the terpene synthase family. Alpha-humulene synthase eupE subfamily. The cofactor is Mg(2+).

The enzyme catalyses (2E,6E)-farnesyl diphosphate = alpha-humulene + diphosphate. It participates in secondary metabolite biosynthesis; terpenoid biosynthesis. Its function is as follows. Alpha-humulene synthase; part of the gene cluster that mediates the biosynthesis of eupenifeldin, a bistropolone meroterpenoid that acts as an antitumor agent. The first step of eupenifeldin biosynthesis is the biosynthesis of 3-methylorcinaldehyde performed by the non-reducing polyketide synthase eupA. Oxidative dearomatization of 3-methylorcinaldehyde likely catalyzed by the FAD-dependent monooxygenase eupB is followed by oxidative ring expansion by the 2-oxoglutarate-dependent dioxygenase eupC to provide the first tropolone metabolite, tropolone stipitaldehyde. In parallel, generation of sesquiterpene alpha-humulene from farnesylpyrophosphate (FPP) is catalyzed by the terpene cyclase eupE. The cytochrome P450 monooxygenase eupD then hydroxylates humulene to humulenol. The putative Diels-Alderase eupF probably catalyzes the formation of the tropolone-humulene skeleton by linking humulenol and the polyketide moiety. The short-chain dehydrogenase/reductase eupG and the flavin-dependent monooxygenase eupH are also essential for eupenifeldin biosynthesis and are likely the additional decorating enzymes of the tropolone-humulene skeleton to produce final eupenifeldin or derivatives. The protein is Alpha-humulene synthase eupE of Phoma sp.